A 512-amino-acid polypeptide reads, in one-letter code: MNLQLDYFSITSFLVFLVVLFRIVSDWNKKSTNLRLPPGPSKLPIIGSVHHMIGLDVDLPYHALTDLAKKYGPLMHLQLGQMSLVVASSAKMFKELMKENDLAISQRPVPYVARVLNDAGRDIAFVPYGDYWRQIRKISRMELFSVRKVQSLYYIREDQSNKMIDAIGGSAETVMNLSKAVSDYTSTVVARAAFGSGCKDQDKFIKLSLEMVAAAGAVSTLPDMFPALGFIPVLSGKKAFLQNIQKEADKILDYIIDEHIQRTKSKDYDGKESDKEDIVDVLLRLEKTGELEIPITTPDIKAVIWSVFAGGTDTSSTTTLWAMSELMRNPKVMEKVQAEVREKLKGKKEILEADIQDLPYMRAVIKETLRLRIPGPLLLPRETMEPIEVDGYVIPEKTKILFNAWAVTRDPELWENPESFIPERFIEKQIDFKGTNYEFTPFGSGRRICPGMNFGIANVELPLAKLLYYFNWQLPHGMKPEDLDMTAKFGVVCGRKNDLFLIPTPYNIEVEN.

A helical membrane pass occupies residues 1 to 21 (MNLQLDYFSITSFLVFLVVLF). Asn436 contacts heme.

It belongs to the cytochrome P450 family. Heme serves as cofactor. Mainly expressed in petioles and roots, and, to a lower extent, in leaves.

Its subcellular location is the membrane. It catalyses the reaction tirucalla-7,24-dien-3beta-ol + 2 reduced [NADPH--hemoprotein reductase] + 2 O2 = dihydroniloticin + 2 oxidized [NADPH--hemoprotein reductase] + 2 H2O + 2 H(+). Its pathway is secondary metabolite biosynthesis; terpenoid biosynthesis. Monooxygenase involved in the biosynthesis of limonoids triterpene natural products such as azadirachtin, an antifeedant widely used as bioinsecticide, and possessing many medicinal applications including anti-tumoral, anti-malarial, anti-rheumatic, antibacterial, anti-inflammatory, anti-pyretic and diuretic effects. Catalyzes the conversion of tirucalladienol to dihydroniloticin. This chain is Dihydroniloticin synthase CYP71CD2, found in Melia azedarach (Chinaberry tree).